Here is a 295-residue protein sequence, read N- to C-terminus: Protoheme IX farnesyltransferase (295 aa).

The next 9 helical transmembrane spans lie at I9 to A29, F36 to F56, L80 to L100, L108 to L128, G135 to S155, L163 to F183, I209 to A229, G230 to K250, and F265 to V285.

It belongs to the UbiA prenyltransferase family. Protoheme IX farnesyltransferase subfamily.

Its subcellular location is the cell inner membrane. It catalyses the reaction heme b + (2E,6E)-farnesyl diphosphate + H2O = Fe(II)-heme o + diphosphate. It participates in porphyrin-containing compound metabolism; heme O biosynthesis; heme O from protoheme: step 1/1. Converts heme B (protoheme IX) to heme O by substitution of the vinyl group on carbon 2 of heme B porphyrin ring with a hydroxyethyl farnesyl side group. This is Protoheme IX farnesyltransferase from Pseudomonas syringae pv. syringae (strain B728a).